Here is a 67-residue protein sequence, read N- to C-terminus: Probable Sec-independent protein translocase protein TatE (67 aa).

A helical transmembrane segment spans residues 4-21 (ISITKLLVVAALVVLLFG).

This sequence belongs to the TatA/E family. TatE subfamily.

Its subcellular location is the cell inner membrane. Its function is as follows. Part of the twin-arginine translocation (Tat) system that transports large folded proteins containing a characteristic twin-arginine motif in their signal peptide across membranes. TatE shares overlapping functions with TatA. This is Probable Sec-independent protein translocase protein TatE from Salmonella dublin (strain CT_02021853).